A 498-amino-acid chain; its full sequence is MQETPSVPSNSSSHSQSVLTIQRQVSALGSSSTGPTSLKTSSTPTPGQLKTKVPNVRRMRRIISEDAEWSLAIVPLLTELCIQHIVKNFQNNPILKQLPLEHQKKVLSNLPPELPLTVTANLIDDENYWHRCCIKRWSVCHVSRHGGSWKRMFFERHLENLLKLFIPGTTDPNVILDLLPLCRNYVRRIHVDQFLPPVRMPTPLQGEEQSDSGSEGEGSEPEKDHYQLQTLVGGLKHLEELDLVYGVKDCGMNFEWNLFLFTYRDCYSLAATIKACHTLKIFKLTRSKVDDDKARILIRSLLDHPALEELDLSHNLIGDRGARAAAKLLSHSRLRVLNLANNQLQAPGAQSLAHALAHNTNLVFLNLRLNCIEDEGGQAIAHALETNKCLSVLHLGGNKLSEPTATLLSQMLTVNTTLVSLNLSCNHIGQDGGKQLLEGISDNKTILEFDLRLSDVSQESEYLIGQVLHANREAARQRTLNPGHFSSPTNNCTENSVV.

Disordered regions lie at residues 27–52 (ALGSSSTGPTSLKTSSTPTPGQLKTK) and 200–223 (MPTPLQGEEQSDSGSEGEGSEPEK). Over residues 28-47 (LGSSSTGPTSLKTSSTPTPG) the composition is skewed to low complexity. 6 LRR repeats span residues 276–299 (CHTLKIFKLTRSKVDDDKARILIR), 306–327 (ALEELDLSHNLIGDRGARAAAK), 333–353 (RLRVLNLANNQLQAPGAQSLA), 361–382 (NLVFLNLRLNCIEDEGGQAIAH), 389–409 (CLSVLHLGGNKLSEPTATLLS), and 417–438 (TLVSLNLSCNHIGQDGGKQLLE).

The protein belongs to the DRC5 family. Component of the nexin-dynein regulatory complex (N-DRC). Interacts with DRC1. Interacts with FBXL13/DRC6, DRC3 and DRC7. Testis-specific (at protein level).

It is found in the cell projection. The protein localises to the cilium. Its subcellular location is the flagellum. It localises to the cytoplasm. The protein resides in the cytoskeleton. It is found in the flagellum axoneme. Its function is as follows. Component of the nexin-dynein regulatory complex (N-DRC) a key regulator of ciliary/flagellar motility which maintains the alignment and integrity of the distal axoneme and regulates microtubule sliding in motile axonemes. May play a role in the assembly of N-DRC. Required for sperm motility. The chain is Dynein regulatory complex subunit 5 (Tcte1) from Mus musculus (Mouse).